A 958-amino-acid polypeptide reads, in one-letter code: Coiled-coil domain-containing protein 80 (958 aa).

The signal sequence occupies residues 1-21; sequence MNWMPALSLALLWTAWLVCGS. 5 disordered regions span residues 30 to 99, 290 to 335, 358 to 396, 424 to 452, and 467 to 617; these read RGSH…TRTR, VVED…TVRK, TATR…TTTE, ANRR…RYES, and ASMS…QPPR. Residues 358–389 are compositionally biased toward low complexity; sequence TATRATTRTVTTASRPTTTTTPLPTTQRTWTT. 2 stretches are compositionally biased toward basic and acidic residues: residues 425 to 438 and 471 to 487; these read NRRD…EKHL and RFKD…HRDL. Residues 495-506 are compositionally biased toward basic residues; sequence KPTKTKPPKKKT. 2 stretches are compositionally biased toward basic and acidic residues: residues 547 to 589 and 597 to 606; these read KKHE…DKDR and SRTENEDFPK.

The protein belongs to the CCDC80 family. As to quaternary structure, binds to various extracellular matrix proteins.

Its subcellular location is the secreted. It is found in the extracellular space. The protein localises to the extracellular matrix. Promotes cell adhesion and matrix assembly. May play a role in eye formation. This is Coiled-coil domain-containing protein 80 (CCDC80) from Gallus gallus (Chicken).